Reading from the N-terminus, the 206-residue chain is Cytochrome c oxidase assembly protein CtaG (206 aa).

Over 1–17 (MPEVQPSALPKPAPRLG) the chain is Cytoplasmic. The chain crosses the membrane as a helical; Signal-anchor for type II membrane protein span at residues 18-40 (RDAAVASICGFVVALMVGASFAA). Over 41 to 206 (VPFYDWFCRT…GEPDQRKGNL (166 aa)) the chain is Periplasmic.

It belongs to the COX11/CtaG family.

It localises to the cell inner membrane. Exerts its effect at some terminal stage of cytochrome c oxidase synthesis, probably by being involved in the insertion of the copper B into subunit I. In Rhodopseudomonas palustris (strain BisB5), this protein is Cytochrome c oxidase assembly protein CtaG.